The chain runs to 89 residues: Large ribosomal subunit protein bL27 (89 aa).

A disordered region spans residues 1-22 (MAHKKAGGSSRNGRDSAGRRLG).

Belongs to the bacterial ribosomal protein bL27 family.

In Sphingopyxis alaskensis (strain DSM 13593 / LMG 18877 / RB2256) (Sphingomonas alaskensis), this protein is Large ribosomal subunit protein bL27.